The chain runs to 427 residues: Putative zinc protease AlbF (427 aa).

His-66 contacts Zn(2+). Glu-69 functions as the Proton acceptor in the catalytic mechanism. 2 residues coordinate Zn(2+): His-70 and Glu-142.

Belongs to the peptidase M16 family. Requires Zn(2+) as cofactor.

Its function is as follows. Required for production of the bacteriocin subtilosin. Could catalyze some step in the processing of presubtilosin. The sequence is that of Putative zinc protease AlbF (albF) from Bacillus subtilis.